We begin with the raw amino-acid sequence, 396 residues long: Lipopolysaccharide assembly protein B (396 aa).

The helical transmembrane segment at 1-20 (MIELLFLLLPIAAAYGWYMG) threads the bilayer. Residues 21–396 (RRSAKKDQDD…IKPVSNQEHN (376 aa)) lie on the Cytoplasmic side of the membrane. TPR repeat units lie at residues 35–68 (LSRDYVTGVNFLLSNQTDKAVDLFLDMLQKQEIE), 77–109 (FEAELTLGNLFRSRGEVDRALRIHQALDLSPNY), 149–182 (ENALQQLLVIYQKTKEWKKAVNIAEKLAKIKPQE), and 221–254 (VRASLLLANLAMLDGQYQQAVKILENVLEQNPDY). Positions 364, 367, 378, and 381 each coordinate Fe cation.

It belongs to the LapB family.

The protein localises to the cell inner membrane. Functionally, modulates cellular lipopolysaccharide (LPS) levels by regulating LpxC, which is involved in lipid A biosynthesis. May act by modulating the proteolytic activity of FtsH towards LpxC. May also coordinate assembly of proteins involved in LPS synthesis at the plasma membrane. In Haemophilus influenzae (strain ATCC 51907 / DSM 11121 / KW20 / Rd), this protein is Lipopolysaccharide assembly protein B.